The following is a 351-amino-acid chain: Dihydroorotate dehydrogenase (quinone) (351 aa).

FMN is bound by residues 61–65 (AGLDK) and Thr85. Residue Lys65 coordinates substrate. 110–114 (NRMGF) is a binding site for substrate. Asn139 and Asn172 together coordinate FMN. Residue Asn172 participates in substrate binding. Ser175 (nucleophile) is an active-site residue. Asn177 serves as a coordination point for substrate. Residues Lys217 and Thr245 each contribute to the FMN site. Residue 246-247 (NT) coordinates substrate. FMN contacts are provided by residues Gly268, Gly297, and 318-319 (YS).

This sequence belongs to the dihydroorotate dehydrogenase family. Type 2 subfamily. In terms of assembly, monomer. FMN is required as a cofactor.

Its subcellular location is the cell membrane. It carries out the reaction (S)-dihydroorotate + a quinone = orotate + a quinol. It functions in the pathway pyrimidine metabolism; UMP biosynthesis via de novo pathway; orotate from (S)-dihydroorotate (quinone route): step 1/1. Catalyzes the conversion of dihydroorotate to orotate with quinone as electron acceptor. This is Dihydroorotate dehydrogenase (quinone) from Xanthomonas oryzae pv. oryzae (strain MAFF 311018).